The chain runs to 142 residues: Small heat shock protein IbpB (142 aa).

The sHSP domain occupies T26–R137.

The protein belongs to the small heat shock protein (HSP20) family. Homodimer. Forms homomultimers of about 100-150 subunits at optimal growth temperatures. Conformation changes to oligomers at high temperatures or high ionic concentrations. The decrease in size of the multimers is accompanied by an increase in chaperone activity.

It is found in the cytoplasm. Its function is as follows. Associates with aggregated proteins, together with IbpA, to stabilize and protect them from irreversible denaturation and extensive proteolysis during heat shock and oxidative stress. Aggregated proteins bound to the IbpAB complex are more efficiently refolded and reactivated by the ATP-dependent chaperone systems ClpB and DnaK/DnaJ/GrpE. Its activity is ATP-independent. This is Small heat shock protein IbpB from Citrobacter koseri (strain ATCC BAA-895 / CDC 4225-83 / SGSC4696).